A 1174-amino-acid polypeptide reads, in one-letter code: MSFQTLERERTFKNPPKDGTSFPDLQKAVKPHVDSFNALTNAGLLNYAVKEIGEKCAFDSITQEEGGALKFGNKISFRVDEVQIAKPMLSSRERSSINRKVYPAEARERLTTYKSRLVLKFSWSVNGGPRQSEMREVGMIPIMVRSNRCHLEGLSPAELIAHKEESEEMGGYFIVNGIEKLIRMLILPKRNHPTAIIRPSFANRGTSYSQYGLSIRCVRPDQSSLTNTLHYLNNGVTMFRFHWRKNEYLIPSMMILKALLETSDKEIFEGIVGKDLGNTFLTDRVELMLRAYKSYGLYSQTETLQYLGSKFRVVLGVAEDLTDVEVGRFLLQKVVLVHLREAKDKFRLLLFMIRKLYALVAGECCADNPDSPQHQEILLGGFLYGQILKEKIEDWLNSIRAQINLDVRRSAPGVDFSDRKYLTRVFSKINNDIGTKLQYFLSTGNLVSNTGLDLQQATGYTVVAEKLNFYRFLSHFRMVHRGAFFAELKTTTVRKLLPEAWGFMCPVHTPDGSPCGLLNHLARKCEIVTHPSDVSQIPSLLLSLGVDPPSVVGHESGWGCVQLDGKIVGWCTYKLAKHVADVLRLMKIEYAVKLRNGTATEPAKVPLDLEIGYVPPSHNGQYPGLYLFSNPARMVRPVKHISTGELDMLGPFEQVYMDIACFPKEIVPKVSTHVEYSPTNVLSIVANMTPFSDFNQSPRNMYQCQMGKQTMGTPGTALRYRTDNKLYRLQTGQTPVVRPKLHNTYGLDHYPNGTNAVVAVISYTGYDMEDAMILNKSAHERGFGYGTVYKGESFDLSQKRRRGEPVVHHFGFAPGSTPRREWLQKLDADGLPFIGIKLEDGDPIVAYYDESTGQNFIETYHGTEPGFVDEVRLLGNDVGDSECQQIHVKLRITRSPIIGDKFSSRHGQKGICSQKWPTVDMPFTESGMQPDIIINPHAFPSRMTIGMFIESLAGKAGACHGLAQDSTPFIYSEQQTAADYFGEQLVKAGYNYHGNEPMYSGITGQEMKADIYIGVVYYQRLRHMVSDKFQVRTTGPIHNLTRQPVKGRKRAGGIRFGEMERDAVIGHGTSFLMQDRLMNCSDYAQSWVCRDCGSIISIMSTISMNGVGSASEVRCRSCAKPALGLEDTSDIWQDGSGKKFVGGTNTTLIALPSVFNYLTAELTAMNIKMMLEVK.

Residues 1-16 (MSFQTLERERTFKNPP) are compositionally biased toward basic and acidic residues. Residues 1–23 (MSFQTLERERTFKNPPKDGTSFP) form a disordered region. A C4-type zinc finger spans residues 1089–1118 (CRDCGSIISIMSTISMNGVGSASEVRCRSC).

Belongs to the RNA polymerase beta chain family. As to quaternary structure, component of the RNA polymerase I (Pol I) complex consisting of 14 subunits.

Its subcellular location is the nucleus. It is found in the nucleolus. It catalyses the reaction RNA(n) + a ribonucleoside 5'-triphosphate = RNA(n+1) + diphosphate. DNA-dependent RNA polymerase catalyzes the transcription of DNA into RNA using the four ribonucleoside triphosphates as substrates. Second largest core component of RNA polymerase I which synthesizes ribosomal RNA precursors. Proposed to contribute to the polymerase catalytic activity and forms the polymerase active center together with the largest subunit. Pol I is composed of mobile elements and RPA2 is part of the core element with the central large cleft and probably a clamp element that moves to open and close the cleft. This is Probable DNA-directed RNA polymerase I subunit RPA2 (rpa2) from Schizosaccharomyces pombe (strain 972 / ATCC 24843) (Fission yeast).